We begin with the raw amino-acid sequence, 299 residues long: Diaminopimelate epimerase (299 aa).

Substrate is bound by residues Asn-15, Gln-47, and Asn-67. Cys-76 acts as the Proton donor in catalysis. Substrate is bound by residues 77–78, Asn-163, Asn-197, and 215–216; these read GN and ER. The active-site Proton acceptor is the Cys-224. 225–226 is a substrate binding site; sequence GS.

This sequence belongs to the diaminopimelate epimerase family. In terms of assembly, homodimer.

It localises to the cytoplasm. It carries out the reaction (2S,6S)-2,6-diaminopimelate = meso-2,6-diaminopimelate. It functions in the pathway amino-acid biosynthesis; L-lysine biosynthesis via DAP pathway; DL-2,6-diaminopimelate from LL-2,6-diaminopimelate: step 1/1. Functionally, catalyzes the stereoinversion of LL-2,6-diaminopimelate (L,L-DAP) to meso-diaminopimelate (meso-DAP), a precursor of L-lysine and an essential component of the bacterial peptidoglycan. In Agrobacterium fabrum (strain C58 / ATCC 33970) (Agrobacterium tumefaciens (strain C58)), this protein is Diaminopimelate epimerase.